The following is a 323-amino-acid chain: Tyrosine recombinase XerD (323 aa).

One can recognise a Core-binding (CB) domain in the interval 21-106 (AEDDQAIQRF…TLRGFYALCL (86 aa)). The Tyr recombinase domain maps to 127-317 (SLPKALTESQ…ARQHLQTLHA (191 aa)). Active-site residues include Arg-167, Lys-191, His-269, Arg-272, and His-295. Catalysis depends on Tyr-304, which acts as the O-(3'-phospho-DNA)-tyrosine intermediate.

It belongs to the 'phage' integrase family. XerD subfamily. As to quaternary structure, forms a cyclic heterotetrameric complex composed of two molecules of XerC and two molecules of XerD.

It localises to the cytoplasm. Its function is as follows. Site-specific tyrosine recombinase, which acts by catalyzing the cutting and rejoining of the recombining DNA molecules. The XerC-XerD complex is essential to convert dimers of the bacterial chromosome into monomers to permit their segregation at cell division. It also contributes to the segregational stability of plasmids. The protein is Tyrosine recombinase XerD of Xanthomonas campestris pv. campestris (strain ATCC 33913 / DSM 3586 / NCPPB 528 / LMG 568 / P 25).